Here is a 37-residue protein sequence, read N- to C-terminus: Potassium channel toxin alpha-KTx 2.19 (37 aa).

3 disulfides stabilise this stretch: C7–C28, C13–C33, and C17–C35.

Expressed by the venom gland.

Its subcellular location is the secreted. Functionally, inhibitor of voltage-gated potassium channels. The protein is Potassium channel toxin alpha-KTx 2.19 of Rhopalurus junceus (Caribbean blue scorpion).